A 474-amino-acid chain; its full sequence is Alanine/serine racemase (474 aa).

Pyridoxal 5'-phosphate-binding positions include 139-140 (GS) and Gln282. Lys308 is subject to N6-(pyridoxal phosphate)lysine. Residue Thr336 coordinates pyridoxal 5'-phosphate.

The protein belongs to the class-III pyridoxal-phosphate-dependent aminotransferase family. In terms of assembly, homohexamer. Pyridoxal 5'-phosphate serves as cofactor.

The enzyme catalyses L-alanine = D-alanine. It catalyses the reaction L-serine = D-serine. Completely inhibited by hydroxylamine hydrochloride. Functionally, catalyzes the interconversion of L-alanine and D-alanine, and L-serine and D-serine. Has weak activity with valine and threonine. In Pyrococcus horikoshii (strain ATCC 700860 / DSM 12428 / JCM 9974 / NBRC 100139 / OT-3), this protein is Alanine/serine racemase.